Consider the following 867-residue polypeptide: MGNRGMEDLIPLVNRLQDAFSAIGQNADLDLPQIAVVGGQSAGKSSVLENFVGRDFLPRGSGIVTRRPLVLQLVNSTTEYAEFLHCKGKKFTDFEEVRLEIEAETDRVTGTNKGISPVPINLRVYSPHVLNLTLVDLPGMTKVPVGDQPPDIEFQIRDMLMQFVTKENCLILAVSPANSDLANSDALKIAKEVDPQGQRTIGVITKLDLMDEGTDARDVLENKLLPLRRGYIGVVNRSQKDIDGKKDITAALAAERKFFLSHPSYRHLADRMGTPYLQKVLNQQLTNHIRDTLPGLRNKLQSQLLSIEKEVDEYKNFRPDDPARKTKALLQMVQQFAVDFEKRIEGSGDQIDTYELSGGARINRIFHERFPFELVKMEFDEKELRREISYAIKNIHGIRTGLFTPDMAFETIVKKQVKKIREPCLKCVDMVISELISTVRQCTKKLQQYPRLREEMERIVTTHIREREGRTKEQVMLLIDIELAYMNTNHEDFIGFANAQQRSNQMNKKKTSGNQDEILVIRKGWLTINNIGIMKGGSKEYWFVLTAENLSWYKDDEEKEKKYMLSVDNLKLRDVEKGFMSSKHIFALFNTEQRNVYKDYRQLELACETQEEVDSWKASFLRAGVYPERVGDKEKASETEENGSDSFMHSMDPQLERQVETIRNLVDSYMAIVNKTVRDLMPKTIMHLMINNTKEFIFSELLANLYSCGDQNTLMEESAEQAQRRDEMLRMYHALKEALSIIGDINTTTVSTPMPPPVDDSWLQVQSVPAGRRSPTSSPTPQRRAPAVPPARPGSRGPAPGPPPAGSALGGAPPVPSRPGASPDPFGPPPQVPSRPNRAPPGVPSLGAWRLNSPQGKHENRAGKARL.

One can recognise a Dynamin-type G domain in the interval 28–294 (DLDLPQIAVV…LTNHIRDTLP (267 aa)). Residues 38 to 45 (GGQSAGKS) are G1 motif. Positions 41, 43, 44, 45, 46, 59, and 60 each coordinate GDP. The tract at residues 64–66 (VTR) is G2 motif. Residue Tyr80 is modified to Phosphotyrosine. Tyr125 carries the 3'-nitrotyrosine; alternate modification. The residue at position 125 (Tyr125) is a Phosphotyrosine; alternate. A G3 motif region spans residues 136–139 (DLPG). The tract at residues 205-208 (TKLD) is G4 motif. The GDP site is built by Lys206, Asp208, Asp211, Asn236, Arg237, and Gln239. Positions 235-238 (VNRS) are G5 motif. Phosphoserine is present on residues Ser306 and Ser347. The residue at position 354 (Tyr354) is a Phosphotyrosine. Residue Ser512 is modified to Phosphoserine. A PH domain is found at 515–625 (QDEILVIRKG…WKASFLRAGV (111 aa)). One can recognise a GED domain in the interval 659–750 (VETIRNLVDS…IIGDINTTTV (92 aa)). The tract at residues 767 to 867 (SVPAGRRSPT…HENRAGKARL (101 aa)) is disordered. A phosphoserine mark is found at Ser774 and Ser778. Omega-N-methylarginine is present on Arg796. Ser822 is modified (phosphoserine). Positions 825 to 843 (PFGPPPQVPSRPNRAPPGV) are enriched in pro residues. Residues Gly847, Leu851, and Lys857 each carry the phosphoserine modification. A compositionally biased stretch (basic and acidic residues) spans 856-867 (GKHENRAGKARL).

It belongs to the TRAFAC class dynamin-like GTPase superfamily. Dynamin/Fzo/YdjA family. Homodimer; homodimerization is mediated by the dynamin-type G domain which promotes assembly-stimulated GTPase activity. Homo-tetramer formed from two dimers in the absence of lipid. Oligomerizes into a helical polymer that self-assembles around the vesicle membrane, when associated to the menbrane through lipid binding. Interacts (via C-terminal proline-rich domain (PRD)) with SNX9 (via SH3 domain); this interaction allows regulation of DNM1 self-assembly during late stages of endocytic vesicle formation and supports DNM1's early functions in accelerating clathrin-coated pits (CCPs) maturation in non neuronals cell. Interacts (via C-terminal proline-rich domain (PRD)) with MYO1E (via SH3 domain); this interaction regulates receptor-mediated endocytosis. Interacts with SNX33 (via SH3 domain); this interaction decreases DNM1-dependent endocytosis. Interacts with DIAPH1. Interacts with GRB2 (via SH3 domain); this interaction mediates disassembly of DNM1 polymers, therefore modulates self-assembly. Forms a complex with BIN1 (via SH3 domain) and SH3GL2 (via SH3 domain). Forms a complex with SH3GL2 (via SH3 domain) and AMPH (via SH3 domain). Forms a complex with SH3GL2 (via SH3 domain) and SYNJ1. Interacts (via C-terminal proline-rich domain (PRD)) with SYT1; this interaction facilitates vesicle fission during clathrin-mediated endocytosis (CME). Interacts (via C-terminal proline-rich domain (PRD)) with PLCG1 (via SH3 domain); this interaction stimulates the release of GDP from DNM1 and enhances DNM1-dependent endocytosis. Interacts with SNPH; this interaction inhibits the binding of DNM1 to AMPH and DNM1-receptor-mediated endocytosis. Interacts with CAV1. Interacts with SH3GLB1 (via SH3 domain). Interacts with PACSIN1 (via SH3 domain), PACSIN2 (via SH3 domain) and PACSIN3 (via SH3 domain). Interacts with UNC119; this interaction decreases DNM1's GTPase activity and affects DNM1's interaction with AMPH. Interacts with AMPH. Interacts (GTP-bound form) with DNAJC6; this interaction allows clathrin-coated vesicle (CCV) formation at the plasma membrane. Phosphorylation at Ser-774 by GSK3B/GSK3-beta leads to inactivation of receptor-mediated endocytosis in non-neuronal cells. Dephosphorylation at Ser-774, through the EGFR downstream signaling, leads to activation and regulates early stages of clathrin-mediated endocytosis (CME). Phosphorylated on Tyr in response to EGF stimulation in cells expressing truncated EGFR. Phosphorylated by CDK5 leading to synaptic vesicle endocytosis (SVE) activation. In terms of tissue distribution, expressed exclusively in the brain.

It localises to the cell membrane. It is found in the membrane. The protein localises to the clathrin-coated pit. Its subcellular location is the cytoplasmic vesicle. The protein resides in the presynapse. It localises to the secretory vesicle. It is found in the chromaffin granule. It carries out the reaction GTP + H2O = GDP + phosphate + H(+). Catalyzes the hydrolysis of GTP and utilizes this energy to mediate vesicle scission and participates in many forms of endocytosis, such as clathrin-mediated endocytosis or synaptic vesicle endocytosis as well as rapid endocytosis (RE). Associates to the membrane, through lipid binding, and self-assembles into rings and stacks of interconnected rings through oligomerization to form a helical polymer around the vesicle membrane leading to constriction of invaginated coated pits around their necks. Self-assembly of the helical polymer induces membrane tubules narrowing until the polymer reaches a length sufficient to trigger GTP hydrolysis. Depending on the curvature imposed on the tubules, membrane detachment from the helical polymer upon GTP hydrolysis can cause spontaneous hemifission followed by complete fission. May play a role in regulating early stages of clathrin-mediated endocytosis in non-neuronal cells through its activation by dephosphorylation via the signaling downstream of EGFR. Controls vesicle size at a step before fission, during formation of membrane pits, at hippocampal synapses. Controls plastic adaptation of the synaptic vesicle recycling machinery to high levels of activity. Mediates rapid endocytosis (RE), a Ca(2+)-dependent and clathrin- and K(+)-independent process in chromaffin cells. Microtubule-associated force-producing protein involved in producing microtubule bundles and able to bind and hydrolyze GTP. Through its interaction with DNAJC6, acts during the early steps of clathrin-coated vesicle (CCV) formation. The polypeptide is Dynamin-1 (Mus musculus (Mouse)).